The primary structure comprises 446 residues: uncharacterized protein (446 aa).

2 disordered regions span residues 63 to 95 (KNKP…SDLR) and 155 to 232 (AESS…HPVK). Residues 156-169 (ESSVPTPKLTNESN) are compositionally biased toward polar residues. 2 stretches are compositionally biased toward basic and acidic residues: residues 182–199 (DQHE…DHSA) and 213–227 (ITKE…EARK).

This is an uncharacterized protein from Mus musculus (Mouse).